The following is a 274-amino-acid chain: MTDTLFADVSEYQVPVNNSYPYRVLSIRVCDGTYRDRNFAHNYRWMRSAFDSGRLTFGIVYTYARPNWWANANTVRSMIDAAGGLHPRVALMLDVESGGNPPGDGSSWINRLYWNLADYAGSPVRIIGYANAYDFFNMWRVRPAGLRVIGAGYGSNPNLPGQVAHQYTDGSGYSPNLPQGAPPFGRCDMNSANGLTPQQFAAACGVTTTGGPLMALTDEEQTELLTKVREIWDQLRGPNGAGWPQLGQNEQGQDLTPVDAIAVIKNDVAAMLAE.

This is an uncharacterized protein from Mycobacterium tuberculosis (strain ATCC 25618 / H37Rv).